The sequence spans 207 residues: Large ribosomal subunit protein bL25 (207 aa).

The protein belongs to the bacterial ribosomal protein bL25 family. CTC subfamily. In terms of assembly, part of the 50S ribosomal subunit; part of the 5S rRNA/L5/L18/L25 subcomplex. Contacts the 5S rRNA. Binds to the 5S rRNA independently of L5 and L18.

This is one of the proteins that binds to the 5S RNA in the ribosome where it forms part of the central protuberance. The chain is Large ribosomal subunit protein bL25 from Brucella canis (strain ATCC 23365 / NCTC 10854 / RM-666).